The sequence spans 72 residues: Hydrophobic protein OSR8 (72 aa).

2 helical membrane passes run 9 to 29 (FLEI…RFGC) and 39 to 59 (LLTI…LVAL).

It belongs to the UPF0057 (PMP3) family.

The protein resides in the membrane. The polypeptide is Hydrophobic protein OSR8 (OSR8) (Oryza sativa subsp. japonica (Rice)).